A 372-amino-acid chain; its full sequence is N-methyl-L-tryptophan oxidase (372 aa).

4-34 is an FAD binding site; that stretch reads DLIIIGSGSVGAAAGYYATRAGLNVLMTDAH. Cys-308 carries the post-translational modification S-8alpha-FAD cysteine.

The protein belongs to the MSOX/MTOX family. MTOX subfamily. In terms of assembly, monomer. FAD is required as a cofactor.

It catalyses the reaction N(alpha)-methyl-L-tryptophan + O2 + H2O = L-tryptophan + formaldehyde + H2O2. Catalyzes the oxidative demethylation of N-methyl-L-tryptophan. This is N-methyl-L-tryptophan oxidase from Escherichia coli O81 (strain ED1a).